The primary structure comprises 664 residues: Degenerin del-1 (664 aa).

The Cytoplasmic segment spans residues 1–67; it reads MARKYIDILK…IFTTSLYWVR (67 aa). The chain crosses the membrane as a helical span at residues 68 to 88; the sequence is FLWVVVSLVCICLCMYSFSHV. Over 89 to 607 the chain is Extracellular; the sequence is KDKYDRKEKI…WFNLMADMGG (519 aa). Asn241, Asn300, Asn394, Asn508, and Asn562 each carry an N-linked (GlcNAc...) asparagine glycan. A helical membrane pass occupies residues 608–628; that stretch reads QAGLFLGASIMSVIEFLFFAV. The Cytoplasmic portion of the chain corresponds to 629 to 664; that stretch reads RTLGIACKPRRWRQKTELLRAEELNDAEKGVSTNNN.

Belongs to the amiloride-sensitive sodium channel (TC 1.A.6) family.

It localises to the membrane. Its function is as follows. Probable sodium channel subunit. This chain is Degenerin del-1 (del-1), found in Caenorhabditis elegans.